We begin with the raw amino-acid sequence, 431 residues long: Ubiquitin-like modifier-activating enzyme 5 (431 aa).

G92, D113, K136, N159, and N197 together coordinate ATP. Zn(2+)-binding residues include C239 and C242. Residue C263 is the Glycyl thioester intermediate of the active site. Positions 316 and 321 each coordinate Zn(2+). The tract at residues 339–396 is disordered; it reads AKAKMEADASTTIDEGPLHDDNEWNISVVDDENEKDTTKAASSSDTLPEGLTRELPVA.

The protein belongs to the ubiquitin-activating E1 family. UBA5 subfamily.

Functionally, E1-like enzyme which activates UFM1. The chain is Ubiquitin-like modifier-activating enzyme 5 from Arabidopsis thaliana (Mouse-ear cress).